The following is a 629-amino-acid chain: Phosphomethylpyrimidine synthase (629 aa).

Residues 1–21 form a disordered region; that stretch reads MSIKAKNAAHLRESAQVDSGS. Substrate-binding positions include Asn233, Met262, Tyr291, His327, 347–349, 388–391, and Glu427; these read SRG and DGLR. His431 serves as a coordination point for Zn(2+). Tyr454 contacts substrate. His495 lines the Zn(2+) pocket. Residues Cys575, Cys578, and Cys583 each contribute to the [4Fe-4S] cluster site.

This sequence belongs to the ThiC family. As to quaternary structure, homodimer. It depends on [4Fe-4S] cluster as a cofactor.

The catalysed reaction is 5-amino-1-(5-phospho-beta-D-ribosyl)imidazole + S-adenosyl-L-methionine = 4-amino-2-methyl-5-(phosphooxymethyl)pyrimidine + CO + 5'-deoxyadenosine + formate + L-methionine + 3 H(+). Its pathway is cofactor biosynthesis; thiamine diphosphate biosynthesis. Catalyzes the synthesis of the hydroxymethylpyrimidine phosphate (HMP-P) moiety of thiamine from aminoimidazole ribotide (AIR) in a radical S-adenosyl-L-methionine (SAM)-dependent reaction. The protein is Phosphomethylpyrimidine synthase of Pseudomonas syringae pv. syringae (strain B728a).